Here is a 434-residue protein sequence, read N- to C-terminus: Enolase (434 aa).

2 residues coordinate substrate: His-158 and Glu-167. The active-site Proton donor is Glu-210. 3 residues coordinate Mg(2+): Asp-245, Glu-294, and Asp-319. 2 residues coordinate substrate: Glu-294 and Asp-319. The active-site Proton acceptor is Lys-344. Residues 371–374 and Lys-395 each bind substrate; that span reads SHRS.

This sequence belongs to the enolase family. In terms of assembly, homodimer. Requires Mg(2+) as cofactor.

It localises to the cytoplasm. The catalysed reaction is (2R)-2-phosphoglycerate = phosphoenolpyruvate + H2O. The protein operates within carbohydrate degradation; glycolysis; pyruvate from D-glyceraldehyde 3-phosphate: step 4/5. This chain is Enolase (ENO), found in Schistosoma mansoni (Blood fluke).